The primary structure comprises 308 residues: Ribosomal RNA large subunit methyltransferase F (308 aa).

This sequence belongs to the methyltransferase superfamily. METTL16/RlmF family.

It localises to the cytoplasm. The enzyme catalyses adenosine(1618) in 23S rRNA + S-adenosyl-L-methionine = N(6)-methyladenosine(1618) in 23S rRNA + S-adenosyl-L-homocysteine + H(+). In terms of biological role, specifically methylates the adenine in position 1618 of 23S rRNA. This is Ribosomal RNA large subunit methyltransferase F from Escherichia coli O17:K52:H18 (strain UMN026 / ExPEC).